A 196-amino-acid chain; its full sequence is Transmembrane protein 126A (196 aa).

Residues 1-34 lie on the Mitochondrial matrix side of the membrane; the sequence is MESHKPSTSKDDLILNIISRKIKQLPESDRNLLE. A helical membrane pass occupies residues 35-55; that stretch reads YGSAYIGLNAAFGGLIANSLF. The Mitochondrial intermembrane portion of the chain corresponds to 56–57; the sequence is RR. Residues 58 to 78 traverse the membrane as a helical segment; it reads ILNVTQARLASSLPMAVIPFL. Residues 79-106 lie on the Mitochondrial matrix side of the membrane; it reads TANLSYQSLVSLPLSTGDLNCETCTTTR. A helical transmembrane segment spans residues 107 to 127; it reads GALVGLVMGGLYPILLAIPVN. Residues 128–159 lie on the Mitochondrial intermembrane side of the membrane; it reads GGLAARYESSPLPQRGNIFNYWITVSKPVFRK. A helical membrane pass occupies residues 160–176; it reads MLFPTLLQTVFASYLGS. At 177 to 196 the chain is on the mitochondrial matrix side; the sequence is RQYKLLIKALQLPEPDLEIH.

This sequence belongs to the TMEM126 family. As to quaternary structure, interacts with OXA1L; promoting cotranslational quality control in mitochondria. As to expression, in the retina, significant levels of expression are detected in the ganglion cell layer, the optic nerve head, the outer plexiform layer, and in the outer ellipsoide length of photoreceptor inner segments.

The protein resides in the mitochondrion inner membrane. In terms of biological role, protein required for the cotranslational protein quality control in the inner membrane of the mitochondria. Associates with newly synthesized polypeptides and may act as a chaperone that cooperates with OXA1L for the insertion of newly synthesized mitochondrial proteins into the inner membrane. Required for the assembly of the ND4 module of mitochondrial complex I. This Mus musculus (Mouse) protein is Transmembrane protein 126A.